A 60-amino-acid chain; its full sequence is Metallothionein B (60 aa).

A beta region spans residues 1–28 (MDPCDCSKSGTCNCGGSCTCTNCSCTSC). A divalent metal cation-binding residues include Cys-4, Cys-6, Cys-12, Cys-14, Cys-18, Cys-20, Cys-23, Cys-25, Cys-28, Cys-32, Cys-33, Cys-35, Cys-36, Cys-40, Cys-43, Cys-47, Cys-49, Cys-54, Cys-58, and Cys-59. The alpha stretch occupies residues 29–60 (KKSCCPCCPSGCTKCASGCVCKGKTCDTSCCQ).

Belongs to the metallothionein superfamily. Type 1 family.

Its function is as follows. Metallothioneins have a high content of cysteine residues that bind various heavy metals. The polypeptide is Metallothionein B (mtb) (Chionodraco hamatus (Antarctic teleost icefish)).